Here is an 832-residue protein sequence, read N- to C-terminus: Regulator of drug sensitivity 1 (832 aa).

A DNA-binding region (zn(2)-C6 fungal-type) is located at residues 15 to 42 (CLQCKKIKRKCDKLRPACSRCQQNSLQC).

Its subcellular location is the nucleus. In terms of biological role, zinc cluster transcription factor involved in resistance to cycloheximide. The chain is Regulator of drug sensitivity 1 (RDS1) from Saccharomyces cerevisiae (strain ATCC 204508 / S288c) (Baker's yeast).